The primary structure comprises 662 residues: Biosynthetic arginine decarboxylase (662 aa).

K126 carries the N6-(pyridoxal phosphate)lysine modification. Position 308 to 318 (308 to 318 (LNVGGGLGVDY)) interacts with substrate.

It belongs to the Orn/Lys/Arg decarboxylase class-II family. SpeA subfamily. It depends on Mg(2+) as a cofactor. Pyridoxal 5'-phosphate is required as a cofactor.

It catalyses the reaction L-arginine + H(+) = agmatine + CO2. Its function is as follows. Catalyzes the biosynthesis of agmatine from arginine. In Deinococcus radiodurans (strain ATCC 13939 / DSM 20539 / JCM 16871 / CCUG 27074 / LMG 4051 / NBRC 15346 / NCIMB 9279 / VKM B-1422 / R1), this protein is Biosynthetic arginine decarboxylase.